A 520-amino-acid polypeptide reads, in one-letter code: Fumarate hydratase, mitochondrial (520 aa).

A mitochondrion-targeting transit peptide spans 1–39; sequence MASVAHISTAKAIFRAGGLPCRRLITPTLTGLPLKTHRM. Substrate-binding positions include 153 to 155, 184 to 187, 194 to 196, and Thr-242; these read SGT, HPND, and SSN. Catalysis depends on His-243, which acts as the Proton donor/acceptor. Residue Ser-373 is part of the active site. Residues Ser-374 and 379–381 each bind substrate; that span reads KVN.

Belongs to the class-II fumarase/aspartase family. Fumarase subfamily. In terms of assembly, homotetramer.

It is found in the mitochondrion matrix. The protein resides in the cytoplasm. The protein localises to the nucleus. The enzyme catalyses (S)-malate = fumarate + H2O. It participates in carbohydrate metabolism; tricarboxylic acid cycle; (S)-malate from fumarate: step 1/1. In terms of biological role, catalyzes the reversible stereospecific interconversion of fumarate to L-malate. In mitochondrion, catalyzes the hydration of fumarate to L-malate in the tricarboxylic acid (TCA) cycle to facilitate a transition step in the production of energy in the form of NADH. In cytoplasm and nucleus, involved in DNA repair in response to DNA damage: following DNA double-strand breaks (DSBs), translocates from the cytosol to the nucleus and promotes DNA repair by catalyzing the dehydration of L-malate to fumarate. The chain is Fumarate hydratase, mitochondrial (fum1) from Schizosaccharomyces pombe (strain 972 / ATCC 24843) (Fission yeast).